A 425-amino-acid polypeptide reads, in one-letter code: Phosphomethylpyrimidine synthase (425 aa).

Substrate is bound by residues M94, Y123, H162, 184-186 (SRG), 225-228 (NGMR), and E264. Residue H268 participates in Zn(2+) binding. Y291 contacts substrate. H332 contacts Zn(2+). Residues C407, C410, and C414 each coordinate [4Fe-4S] cluster.

It belongs to the ThiC family. [4Fe-4S] cluster serves as cofactor.

The enzyme catalyses 5-amino-1-(5-phospho-beta-D-ribosyl)imidazole + S-adenosyl-L-methionine = 4-amino-2-methyl-5-(phosphooxymethyl)pyrimidine + CO + 5'-deoxyadenosine + formate + L-methionine + 3 H(+). Its pathway is cofactor biosynthesis; thiamine diphosphate biosynthesis. In terms of biological role, catalyzes the synthesis of the hydroxymethylpyrimidine phosphate (HMP-P) moiety of thiamine from aminoimidazole ribotide (AIR) in a radical S-adenosyl-L-methionine (SAM)-dependent reaction. In Methanoregula boonei (strain DSM 21154 / JCM 14090 / 6A8), this protein is Phosphomethylpyrimidine synthase.